Here is a 74-residue protein sequence, read N- to C-terminus: Putative membrane protein insertion efficiency factor (74 aa).

It belongs to the UPF0161 family.

Its subcellular location is the cell membrane. Functionally, could be involved in insertion of integral membrane proteins into the membrane. The chain is Putative membrane protein insertion efficiency factor from Anoxybacillus flavithermus (strain DSM 21510 / WK1).